The following is a 232-amino-acid chain: Ribose-5-phosphate isomerase A (232 aa).

Substrate is bound by residues 28 to 31, 83 to 86, and 96 to 99; these read TGST, DGAD, and KGGG. E105 functions as the Proton acceptor in the catalytic mechanism. K123 lines the substrate pocket.

Belongs to the ribose 5-phosphate isomerase family. As to quaternary structure, homodimer.

It carries out the reaction aldehydo-D-ribose 5-phosphate = D-ribulose 5-phosphate. The protein operates within carbohydrate degradation; pentose phosphate pathway; D-ribose 5-phosphate from D-ribulose 5-phosphate (non-oxidative stage): step 1/1. Its function is as follows. Catalyzes the reversible conversion of ribose-5-phosphate to ribulose 5-phosphate. The sequence is that of Ribose-5-phosphate isomerase A from Rhodopseudomonas palustris (strain ATCC BAA-98 / CGA009).